Here is a 264-residue protein sequence, read N- to C-terminus: LIMR family protein SELMODRAFT_416716 (264 aa).

The next 4 membrane-spanning stretches (helical) occupy residues 23-43 (VVILLTVLCLLLGFLYAVIGY), 96-116 (ILFTMFGGVGMATLPLSLIFA), 194-214 (IIWLLHIIVFMLVNPPAFPFL), and 225-245 (WGLLGTTTFAIFCYYLVMSVI).

Belongs to the LIMR family.

The protein resides in the membrane. The chain is LIMR family protein SELMODRAFT_416716 from Selaginella moellendorffii (Spikemoss).